Consider the following 974-residue polypeptide: Valine--tRNA ligase, chloroplastic/mitochondrial 2 (974 aa).

Residues 109 to 119 carry the 'HIGH' region motif; that stretch reads PNVTGSLHMGH. The LRR 1 repeat unit spans residues 432 to 454; the sequence is LAEKALLAVENKELTIIPERFEK. Positions 489-518 form a coiled coil; it reads EEDYIVAKSAEEALEKALEKYGKDVEIYQD. A 'KMSKS' region motif is present at residues 598–602; it reads KMSKS. Residue K601 coordinates ATP. The LRR 2 repeat unit spans residues 857-880; that stretch reads LALLSRLDLNNVHFSNAPPGDANL.

It belongs to the class-I aminoacyl-tRNA synthetase family.

It is found in the plastid. Its subcellular location is the chloroplast. It localises to the mitochondrion. It catalyses the reaction tRNA(Val) + L-valine + ATP = L-valyl-tRNA(Val) + AMP + diphosphate. The sequence is that of Valine--tRNA ligase, chloroplastic/mitochondrial 2 from Arabidopsis thaliana (Mouse-ear cress).